Consider the following 374-residue polypeptide: Aminomethyltransferase (374 aa).

It belongs to the GcvT family. As to quaternary structure, the glycine cleavage system is composed of four proteins: P, T, L and H.

It carries out the reaction N(6)-[(R)-S(8)-aminomethyldihydrolipoyl]-L-lysyl-[protein] + (6S)-5,6,7,8-tetrahydrofolate = N(6)-[(R)-dihydrolipoyl]-L-lysyl-[protein] + (6R)-5,10-methylene-5,6,7,8-tetrahydrofolate + NH4(+). Its function is as follows. The glycine cleavage system catalyzes the degradation of glycine. The sequence is that of Aminomethyltransferase from Prochlorococcus marinus (strain MIT 9313).